The primary structure comprises 261 residues: Tryptophan synthase alpha chain (261 aa).

Catalysis depends on proton acceptor residues E47 and D58.

The protein belongs to the TrpA family. In terms of assembly, tetramer of two alpha and two beta chains.

The catalysed reaction is (1S,2R)-1-C-(indol-3-yl)glycerol 3-phosphate + L-serine = D-glyceraldehyde 3-phosphate + L-tryptophan + H2O. Its pathway is amino-acid biosynthesis; L-tryptophan biosynthesis; L-tryptophan from chorismate: step 5/5. In terms of biological role, the alpha subunit is responsible for the aldol cleavage of indoleglycerol phosphate to indole and glyceraldehyde 3-phosphate. The protein is Tryptophan synthase alpha chain of Neisseria meningitidis serogroup B (strain ATCC BAA-335 / MC58).